We begin with the raw amino-acid sequence, 685 residues long: Kinesin-like protein KIP2 (685 aa).

2 disordered regions span residues 11–46 (EHVG…GPAQ) and 63–101 (SRPS…SGAS). The segment covering 86 to 101 (GSPQSPDAPSSASGAS) has biased composition (low complexity). The Kinesin motor domain maps to 113-446 (NVSVAIRIKP…VRFASRAKNI (334 aa)). 185–192 (GMTGSGKT) contacts ATP. Coiled-coil stretches lie at residues 464–486 (IIQN…RRSA) and 520–663 (LEVE…SALS). A disordered region spans residues 485–510 (SAAAPSGNGSTSPLDSPGVGGTSLSE).

Belongs to the TRAFAC class myosin-kinesin ATPase superfamily. Kinesin family.

The protein resides in the cytoplasm. It is found in the cytoskeleton. In terms of biological role, required for assembly of the mitotic spindle. The polypeptide is Kinesin-like protein KIP2 (KIP2) (Eremothecium gossypii (strain ATCC 10895 / CBS 109.51 / FGSC 9923 / NRRL Y-1056) (Yeast)).